The primary structure comprises 101 residues: MAGSRINFTNYLRNLNVQEPQVEEYVAPNDEELALFTNTNFFDYETGQNTDYQAPPVKPDAVVAPTPVETAATSPEVPTDAFMTEFLSGLDQGLEFAAPAG.

This is an uncharacterized protein from Neurospora crassa (strain ATCC 24698 / 74-OR23-1A / CBS 708.71 / DSM 1257 / FGSC 987).